The primary structure comprises 347 residues: Selenide, water dikinase (347 aa).

Cys17 is a catalytic residue. ATP contacts are provided by residues Lys20 and 48–50; that span reads TRD. Asp51 is a Mg(2+) binding site. Residues Asp68, Asp91, and 139–141 each bind ATP; that span reads GHS. A Mg(2+)-binding site is contributed by Asp91. Residue Asp227 participates in Mg(2+) binding.

Belongs to the selenophosphate synthase 1 family. Class I subfamily. Homodimer. Mg(2+) is required as a cofactor.

It carries out the reaction hydrogenselenide + ATP + H2O = selenophosphate + AMP + phosphate + 2 H(+). Its function is as follows. Synthesizes selenophosphate from selenide and ATP. The sequence is that of Selenide, water dikinase from Enterobacter sp. (strain 638).